The chain runs to 297 residues: Leucine-rich repeat-containing protein 25 (297 aa).

The N-terminal stretch at 1–25 is a signal peptide; that stretch reads MGSIRTRLLWLCLLMLLALLHKSGS. The Extracellular segment spans residues 26–169; sequence QDLTCMVHPS…SCPPSWGPGT (144 aa). Residues Asn44 and Asn49 are each glycosylated (N-linked (GlcNAc...) asparagine). LRR repeat units lie at residues 66 to 89 and 90 to 113; these read HAQVLDLSKNGLQVLPGAFFDKLE and KLQTLIVTHNQLDSVDRSLALRCD. Asn133 and Asn152 each carry an N-linked (GlcNAc...) asparagine glycan. Residues 170 to 190 traverse the membrane as a helical segment; sequence IGALVAGTISLAVAVSGSVLA. Over 191–297 the chain is Cytoplasmic; the sequence is WRLLRRRRRA…VYCNLESLGR (107 aa). A disordered region spans residues 202–244; that stretch reads EHSLSKAQMSPHDIPKPVTDFLPRYSSRRPGPKAPDSPPSRFT. A phosphoserine mark is found at Ser211, Ser238, and Ser267. The residue at position 289 (Tyr289) is a Phosphotyrosine.

As to quaternary structure, interacts with RIGI. Interacts with SQSTM1. Interacts with p65/RELA; this interaction promotes the degradation of RELA through autophagy.

The protein localises to the membrane. It is found in the cytoplasm. Plays a role in the inhibition of RLR-mediated type I interferon signaling pathway by targeting RIGI for autophagic degradation. Interacts specifically with ISG15-associated RIGI to promote interaction between RIGI and the autophagic cargo receptor p62/SQSTM1 to mediate RIGI degradation via selective autophagy. Plays also a role in the inhibition of NF-kappa-B signaling pathway and inflammatory response by promoting the degradation of p65/RELA. This chain is Leucine-rich repeat-containing protein 25 (Lrrc25), found in Mus musculus (Mouse).